Here is a 102-residue protein sequence, read N- to C-terminus: Small ribosomal subunit protein uS10 (102 aa).

It belongs to the universal ribosomal protein uS10 family. Part of the 30S ribosomal subunit.

Its function is as follows. Involved in the binding of tRNA to the ribosomes. In Caulobacter sp. (strain K31), this protein is Small ribosomal subunit protein uS10.